A 366-amino-acid chain; its full sequence is Mitochondrial substrate carrier family protein H (366 aa).

The span at 1-25 (MLSNSVNNNNNNNNINNSNSNNNDS) shows a compositional bias: low complexity. Positions 1 to 26 (MLSNSVNNNNNNNNINNSNSNNNDSN) are disordered. Solcar repeat units lie at residues 29–121 (KNVK…LKEY), 132–243 (NIYT…LKNK), and 259–360 (SPFF…IKQS). 6 helical membrane-spanning segments follow: residues 35-55 (MVASIFGGIMSSLIVTPLDVV), 96-112 (GVTPSLLMTIPSATIYF), 133-151 (IYTVPLVAGTLARIFSASV), 175-192 (VAMAASSSTATIGTIPLS), 262-282 (FINFIAGATSGTLAAVLTTPI), and 340-357 (VAKVSPACAIMISTFEYI).

Belongs to the mitochondrial carrier (TC 2.A.29) family.

The protein resides in the mitochondrion inner membrane. In terms of biological role, mitochondrial transporter required for glutathione import into mitochondria. The polypeptide is Mitochondrial substrate carrier family protein H (Dictyostelium discoideum (Social amoeba)).